The following is a 235-amino-acid chain: Protein RESISTANCE TO PHYTOPHTHORA 1, chloroplastic (235 aa).

The transit peptide at Met1–Ser43 directs the protein to the chloroplast. Basic and acidic residues predominate over residues Val53–Asp66. Positions Val53–Val92 are disordered. Transmembrane regions (helical) follow at residues Phe131–Phe151, Ile158–Arg178, Leu188–Ser208, and Val211–Leu231.

The protein resides in the plastid. It localises to the chloroplast. The protein localises to the membrane. Plays a positive role in the immune response to the oomycetes P.infestans, including induced oxidative burst and enhanced expression of defense-related genes. In Solanum tuberosum (Potato), this protein is Protein RESISTANCE TO PHYTOPHTHORA 1, chloroplastic.